Here is a 516-residue protein sequence, read N- to C-terminus: ADP-ribosylation factor GTPase-activating protein 3 (516 aa).

In terms of domain architecture, Arf-GAP spans 10–126 (LTIFKRLRSV…IKSLASQATR (117 aa)). Residues 25 to 48 (CFDCGAKNPSWASITYGVFLCIDC) form a C4-type zinc finger. Residues 170–199 (AEPSSLTSRPVETTLENNEGGQEQGPSVEG) are disordered. Positions 173–194 (SSLTSRPVETTLENNEGGQEQG) are enriched in polar residues. Serine 231 carries the phosphoserine modification. The stretch at 243-264 (NEIEKQAQAADKMKEQEDLAKA) forms a coiled coil. Phosphoserine is present on residues serine 270, serine 274, serine 331, and serine 370. The interval 392 to 414 (KTTGYSDRPTARRKPDYEPVENT) is disordered. Serine 428, serine 451, serine 453, serine 455, serine 457, and serine 458 each carry phosphoserine.

It localises to the cytoplasm. Its subcellular location is the golgi apparatus membrane. GAP activity stimulated by phosphatidylinositol 4,5-bisphosphate (PIP2). In terms of biological role, GTPase-activating protein (GAP) for ADP ribosylation factor 1 (ARF1). Hydrolysis of ARF1-bound GTP may lead to dissociation of coatomer from Golgi-derived membranes to allow fusion with target membranes. This Macaca fascicularis (Crab-eating macaque) protein is ADP-ribosylation factor GTPase-activating protein 3.